The following is a 443-amino-acid chain: UDP-N-acetylmuramoylalanine--D-glutamate ligase (443 aa).

116 to 122 (GTNGKST) serves as a coordination point for ATP.

This sequence belongs to the MurCDEF family.

The protein resides in the cytoplasm. It catalyses the reaction UDP-N-acetyl-alpha-D-muramoyl-L-alanine + D-glutamate + ATP = UDP-N-acetyl-alpha-D-muramoyl-L-alanyl-D-glutamate + ADP + phosphate + H(+). The protein operates within cell wall biogenesis; peptidoglycan biosynthesis. Its function is as follows. Cell wall formation. Catalyzes the addition of glutamate to the nucleotide precursor UDP-N-acetylmuramoyl-L-alanine (UMA). In Novosphingobium aromaticivorans (strain ATCC 700278 / DSM 12444 / CCUG 56034 / CIP 105152 / NBRC 16084 / F199), this protein is UDP-N-acetylmuramoylalanine--D-glutamate ligase.